A 486-amino-acid polypeptide reads, in one-letter code: uncharacterized protein (486 aa).

The N-terminal stretch at 1–25 (MGTMRSVYLIIIIILFFAFISLSFG) is a signal peptide. Basic and acidic residues-rich tracts occupy residues 306–316 (KKEEKENEESS) and 326–349 (KKEEKSQTQETKKPSKNEMNKQEK). The tract at residues 306-349 (KKEEKENEESSKTINQMQRHKKEEKSQTQETKKPSKNEMNKQEK) is disordered.

This is an uncharacterized protein from Methanocaldococcus jannaschii (strain ATCC 43067 / DSM 2661 / JAL-1 / JCM 10045 / NBRC 100440) (Methanococcus jannaschii).